The following is a 335-amino-acid chain: Leukocyte immunoglobulin-like receptor subfamily B member 4A (335 aa).

The signal sequence occupies residues M1–A23. Residues G24–K238 are Extracellular-facing. Ig-like C2-type domains lie at Y42–S125 and P124–N212. C49 and C98 are disulfide-bonded. N-linked (GlcNAc...) asparagine glycosylation is found at N133 and N191. An intrachain disulfide couples C144 to C196. Residues I239–I260 traverse the membrane as a helical segment. At G261–S335 the chain is on the cytoplasmic side. 2 consecutive short sequence motifs (ITIM motif) follow at residues I298–V303 and V320–L325.

Interacts (when tyrosine phosphorylated) with SH2 domain-containing phosphatases PTPN6/SHP-1 and PTPN11/SHP-2; interaction with PTPN6 enhances inhibition of mast cell activation. In terms of processing, tyrosine phosphorylated. In terms of tissue distribution, expressed on mast cells and natural killer cells (at protein level). Expressed on neutrophils (at protein level). Expressed on eosinophils (at protein level). Expressed on dendritic cells (at protein level). Expressed on memory and marginal zone B cells (at protein level). Expressed on CD8 T cells (at protein level). Expressed in the uterus of pregnant mice where it is detected at day 4.0 of pregnancy with levels dropping at day 4.5. Highly expressed in the luminal epithelium of uterine endometrium with lower levels in the glandular epithelium.

Its subcellular location is the cell membrane. Functionally, inhibitory receptor involved in the down-regulation of the immune response. Receptor for FN1. Receptor for integrin ITGAV/ITGB3. Inhibits IgE-mediated mast cell activation, at least in part through interaction with ITGAV/ITGB3. Also inhibits KITLG/SCF-mediated mast cell activation. Through interaction with ITGAV/ITGB3, inhibits antibody production by memory and marginal zone B cells, probably by suppressing their differentiation into plasma cells. Inhibits IFNG production by CD8 T cells, CD4 T cells and natural killer cells. Inhibits antigen presentation by dendritic cells to T cells, preventing T cell activation. Inhibits lipopolysaccharide-mediated neutrophil-dependent vascular injury. Suppresses the allergic inflammatory response by inhibiting infiltration of neutrophils and eosinophils and preventing mast cell degranulation. Inhibits lysis by natural killer cells. This Mus musculus (Mouse) protein is Leukocyte immunoglobulin-like receptor subfamily B member 4A.